The primary structure comprises 254 residues: Low affinity immunoglobulin gamma Fc region receptor III-A (254 aa).

An N-terminal signal peptide occupies residues 1–16 (MWQLLLPTALLLLVSA). Topologically, residues 17–208 (GMRAEDLPKA…ISSFFPPGYQ (192 aa)) are extracellular. 2 Ig-like C2-type domains span residues 24–105 (PKAV…LEVH) and 107–189 (GWLL…VNIT). Cystine bridges form between C47–C89 and C128–C172. N-linked (GlcNAc...) asparagine glycans are attached at residues N56, N63, and N82. N-linked (GlcNAc...) asparagine glycans are attached at residues N180 and N187. A helical membrane pass occupies residues 209 to 229 (VSFCLVMVLLFAVDTGLYFSM). Residues 230 to 254 (KKSIPSSTRDWEDHKFKWSKDPQDK) lie on the Cytoplasmic side of the membrane.

In terms of assembly, forms a heterooligomeric complex with ITAM-containing signaling subunits, either a homodimer of CD247, a homodimer of FCER1G or a heterodimer of CD247 and FCER1G. Interacts (via transmembrane domain) with signaling subunits; this interaction is a prerequisite for receptor complex expression on the cell surface and intracellular signal transduction. Binds the Fc region of antigen-complexed IgG with a preference for IgG1 and IgG3 isotypes. Interacts with CD2; this interaction is involved in NK cell activation and cytotoxicity. Interacts with S100A4; this interaction inhibits PKC-dependent phosphorylation of FCGR3A. Post-translationally, glycosylated. Glycosylation plays an inhibitory role in the interaction with IgG1 and IgG2. In terms of processing, undergoes rapid ectodomain shedding upon NK cell stimulation. The soluble form is produced by a proteolytic cleavage mediated by ADAM17. Repeated stimulation causes receptor shedding, a mechanism that allows for increased NK cell motility and detachment from opsonized target cells while avoiding activation-induced NK cell apoptosis. In terms of tissue distribution, lymphocytes and monocytes.

The protein localises to the cell membrane. It localises to the secreted. Functionally, receptor for the invariable Fc fragment of immunoglobulin gamma (IgG). Optimally activated upon binding of clustered antigen-IgG complexes displayed on cell surfaces, triggers lysis of antibody-coated cells, a process known as antibody-dependent cellular cytotoxicity (ADCC). Does not bind free monomeric IgG, thus avoiding inappropriate effector cell activation in the absence of antigenic trigger. Mediates IgG effector functions on natural killer (NK) cells. Binds antigen-IgG complexes generated upon infection and triggers NK cell-dependent cytokine production and degranulation to limit viral load and propagation. Involved in the generation of memory-like adaptive NK cells capable to produce high amounts of IFNG and to efficiently eliminate virus-infected cells via ADCC. Regulates NK cell survival and proliferation, in particular by preventing NK cell progenitor apoptosis. Fc-binding subunit that associates with CD247 and/or FCER1G adapters to form functional signaling complexes. Following the engagement of antigen-IgG complexes, triggers phosphorylation of immunoreceptor tyrosine-based activation motif (ITAM)-containing adapters with subsequent activation of phosphatidylinositol 3-kinase signaling and sustained elevation of intracellular calcium that ultimately drive NK cell activation. The ITAM-dependent signaling coupled to receptor phosphorylation by PKC mediates robust intracellular calcium flux that leads to production of pro-inflammatory cytokines, whereas in the absence of receptor phosphorylation it mainly activates phosphatidylinositol 3-kinase signaling leading to cell degranulation. Costimulates NK cells and trigger lysis of target cells independently of IgG binding. Mediates the antitumor activities of therapeutic antibodies. Upon ligation on monocytes triggers TNFA-dependent ADCC of IgG-coated tumor cells. Mediates enhanced ADCC in response to afucosylated IgGs. The chain is Low affinity immunoglobulin gamma Fc region receptor III-A (FCGR3A) from Macaca fascicularis (Crab-eating macaque).